Here is a 648-residue protein sequence, read N- to C-terminus: MPSKSACLRHTEAPGQLEGRMLQGQLSNPEKKLIPTSASLPAADSQSSQTNSMPPLSMPAKPSNQNLQAKANLITPQPPIRPKLERTLSLDDKGWRRRRFRGSQEDLTVQNGASPCRGSLQDSVAQSPAYSRPLPCLSTSLQEIPKPRRATGSEGGSPSLWSDCLSGMISTSLDLLHREAASGGPHSRLASLRATHTPPAMDLNIASSSLRTANKVDPEHTDYKLRMQNRLVRAHSNLGPSRPRSPLAGDDHSIHSARSSFSLLAPIRTKDIRSRSYLEGSLLASGALLGADELARYFPDRNMALFVATWNMQGQKELPASLDEFLLPTEADYTQDLYVIGVQEGCSDRREWETRLQETLGPQYVLLSSAAHGVLYMSLFIRRDLIWFCSEVEYSTVTTRIVSQIKTKGALGVSFTFFGTSFLFITSHFTSGDGKVAERLLDYNRTIQALALPRNVPDTNPYRSSAGDVTTRFDEVFWFGDFNFRLSGGRVAVEAFLKQDPEVDVLALLQHDQLTREMKKGSIFKGFEEAEIHFLPSYKFDIGKDTYDSTSKQRTPSYTDRVLYKSRHKGDICPMKYSSCPGIKTSDHRPVYGLFRVKVRPGRDNIPLAAGKFDRELYLIGIKRRISKEIQRQEALKSQSSSAVCTVS.

A disordered region spans residues 1-64 (MPSKSACLRH…PLSMPAKPSN (64 aa)). Positions 36-54 (TSASLPAADSQSSQTNSMP) are enriched in polar residues. 2 repeat units span residues 59 to 62 (PAKP) and 76 to 79 (PQPP). The segment at 59 to 243 (PAKPSNQNLQ…AHSNLGPSRP (185 aa)) is 4 X 4 AA repeats of P-X-X-P. Residues 99–158 (RFRGSQEDLTVQNGASPCRGSLQDSVAQSPAYSRPLPCLSTSLQEIPKPRRATGSEGGSP) are disordered. Serine 103 is modified (phosphoserine). A compositionally biased stretch (polar residues) spans 120–129 (LQDSVAQSPA). The stretch at 147–150 (PRRA) is repeat 3. Phosphothreonine is present on threonine 197. Copy 4 of the repeat occupies 240–243 (PSRP). Phosphoserine occurs at positions 245 and 260. Cysteine 645 carries the cysteine methyl ester modification. Cysteine 645 carries the S-farnesyl cysteine lipid modification. A propeptide spans 646 to 648 (TVS) (removed in mature form).

The protein belongs to the inositol 1,4,5-trisphosphate 5-phosphatase type IV family. In terms of assembly, interacts (when prenylated) with PDE6D; this is important for normal location in cilia.

The protein resides in the cytoplasm. It localises to the cytoskeleton. The protein localises to the cilium axoneme. It is found in the golgi apparatus. Its subcellular location is the golgi stack membrane. The protein resides in the cell membrane. It localises to the cell projection. The protein localises to the ruffle. It is found in the nucleus. It carries out the reaction a 1,2-diacyl-sn-glycero-3-phospho-(1D-myo-inositol-4,5-bisphosphate) + H2O = a 1,2-diacyl-sn-glycero-3-phospho-(1D-myo-inositol 4-phosphate) + phosphate. The enzyme catalyses a 1,2-diacyl-sn-glycero-3-phospho-(1D-myo-inositol-3,4,5-trisphosphate) + H2O = a 1,2-diacyl-sn-glycero-3-phospho-(1D-myo-inositol-3,4-bisphosphate) + phosphate. The catalysed reaction is a 1,2-diacyl-sn-glycero-3-phospho-(1D-myo-inositol-3,5-bisphosphate) + H2O = a 1,2-diacyl-sn-glycero-3-phospho-(1D-myo-inositol-3-phosphate) + phosphate. Its function is as follows. Phosphatidylinositol (PtdIns) phosphatase that specifically hydrolyzes the 5-phosphate of phosphatidylinositol-3,4,5-trisphosphate (PtdIns(3,4,5)P3), phosphatidylinositol 4,5-bisphosphate PtdIns (4,5)P2 and phosphatidylinositol 3,5-bisphosphate (PtdIns(3,5)P2). Specific for lipid substrates, inactive towards water soluble inositol phosphates. Plays an essential role in the primary cilium by controlling ciliary growth and phosphoinositide 3-kinase (PI3K) signaling and stability. In Rattus norvegicus (Rat), this protein is Phosphatidylinositol polyphosphate 5-phosphatase type IV (Inpp5e).